The sequence spans 213 residues: Orotidine 5'-phosphate decarboxylase (213 aa).

Substrate-binding positions include D9, K31, 59–68 (DFKVADIPAT), S115, 166–176 (PGVGAQGGKIE), G191, and R192. Catalysis depends on K61, which acts as the Proton donor.

Belongs to the OMP decarboxylase family. Type 1 subfamily. As to quaternary structure, homodimer.

It catalyses the reaction orotidine 5'-phosphate + H(+) = UMP + CO2. It participates in pyrimidine metabolism; UMP biosynthesis via de novo pathway; UMP from orotate: step 2/2. Its function is as follows. Catalyzes the decarboxylation of orotidine 5'-monophosphate (OMP) to uridine 5'-monophosphate (UMP). The sequence is that of Orotidine 5'-phosphate decarboxylase from Methanocaldococcus jannaschii (strain ATCC 43067 / DSM 2661 / JAL-1 / JCM 10045 / NBRC 100440) (Methanococcus jannaschii).